The chain runs to 162 residues: Caveolin-2 (162 aa).

Residues 1–86 (MGLETEKADV…FEISKYVMYK (86 aa)) are Cytoplasmic-facing. Phosphotyrosine; by SRC is present on Tyr19. Phosphoserine is present on residues Ser20 and Ser23. Phosphotyrosine; by SRC is present on Tyr27. Phosphoserine is present on Ser36. Residues 87–107 (FLTVFLAIPLAFIAGILFATL) constitute an intramembrane region (helical). Over 108-162 (SCLHIWILMPFVKTCLMVLPSVQTIWKSVTDVIIAPLCTSVGRSFSSVSLQLSQD) the chain is Cytoplasmic.

This sequence belongs to the caveolin family. As to quaternary structure, monomer or homodimer. Interacts with CAV1; the interaction forms a stable heterooligomeric complex that is required for targeting to lipid rafts and for caveolae formation. Tyrosine phosphorylated forms do not form heterooligomers with the Tyr-19-phosphorylated form existing as a monomer or dimer, and the Tyr-27-form as a monomer only. Interacts (tyrosine phosphorylated form) with the SH2 domain-containing proteins, RASA1, NCK1 and SRC. Interacts (tyrosine phosphorylated form) with INSR, the interaction (Tyr-27-phosphorylated form) is increased on insulin stimulation. Interacts (Tyr-19 phosphorylated form) with MAPK1 (phosphorylated form); the interaction, promoted by insulin, leads to nuclear location and MAPK1 activation. Interacts with STAT3; the interaction is increased on insulin-induced tyrosine phosphorylation leading to STAT activation. Post-translationally, phosphorylated on serine and tyrosine residues. CAV1 promotes phosphorylation on Ser-23 which then targets the complex to the plasma membrane, lipid rafts and caveolae. Phosphorylation on Ser-36 appears to modulate mitosis in endothelial cells. Phosphorylation on both Tyr-19 and Tyr-27 is required for insulin-induced 'Ser-727' phosphorylation of STAT3 and its activation. Phosphorylation on Tyr-19 is required for insulin-induced phosphorylation of MAPK1 and DNA binding of STAT3. Tyrosine phosphorylation is induced by both EGF and insulin (By. similarity).

Its subcellular location is the nucleus. The protein localises to the cytoplasm. It localises to the golgi apparatus membrane. It is found in the cell membrane. The protein resides in the membrane. Its subcellular location is the caveola. May act as a scaffolding protein within caveolar membranes. Interacts directly with G-protein alpha subunits and can functionally regulate their activity. Acts as an accessory protein in conjunction with CAV1 in targeting to lipid rafts and driving caveolae formation. The Ser-36 phosphorylated form has a role in modulating mitosis in endothelial cells. Positive regulator of cellular mitogenesis of the MAPK signaling pathway. Required for the insulin-stimulated nuclear translocation and activation of MAPK1 and STAT3, and the subsequent regulation of cell cycle progression. The protein is Caveolin-2 (CAV2) of Pongo abelii (Sumatran orangutan).